The chain runs to 175 residues: NADH-quinone oxidoreductase subunit I (175 aa).

4Fe-4S ferredoxin-type domains lie at L44 to A74 and R90 to D119. The [4Fe-4S] cluster site is built by C54, C57, C60, C64, C99, C102, C105, and C109. Residues P148 to R175 are disordered.

This sequence belongs to the complex I 23 kDa subunit family. NDH-1 is composed of 14 different subunits. Subunits NuoA, H, J, K, L, M, N constitute the membrane sector of the complex. The cofactor is [4Fe-4S] cluster.

It is found in the cell membrane. The enzyme catalyses a quinone + NADH + 5 H(+)(in) = a quinol + NAD(+) + 4 H(+)(out). NDH-1 shuttles electrons from NADH, via FMN and iron-sulfur (Fe-S) centers, to quinones in the respiratory chain. The immediate electron acceptor for the enzyme in this species is believed to be menaquinone. Couples the redox reaction to proton translocation (for every two electrons transferred, four hydrogen ions are translocated across the cytoplasmic membrane), and thus conserves the redox energy in a proton gradient. This is NADH-quinone oxidoreductase subunit I from Mycolicibacterium gilvum (strain PYR-GCK) (Mycobacterium gilvum (strain PYR-GCK)).